We begin with the raw amino-acid sequence, 185 residues long: Ribosome-recycling factor (185 aa).

It belongs to the RRF family.

It localises to the cytoplasm. Its function is as follows. Responsible for the release of ribosomes from messenger RNA at the termination of protein biosynthesis. May increase the efficiency of translation by recycling ribosomes from one round of translation to another. The protein is Ribosome-recycling factor of Streptococcus pneumoniae serotype 19F (strain G54).